Here is a 400-residue protein sequence, read N- to C-terminus: Large envelope protein (400 aa).

Disordered stretches follow at residues 1 to 50 (MGGW…PHKD) and 84 to 116 (ILTS…RDTH). Gly2 carries the N-myristoyl glycine; by host lipid modification. The pre-S1 stretch occupies residues 2–119 (GGWSSKPRKG…PPLRDTHPQA (118 aa)). Residues 2 to 174 (GGWSSKPRKG…LSTTGDPVPN (173 aa)) are pre-S. The Virion surface; in external conformation portion of the chain corresponds to 2–181 (GGWSSKPRKG…VPNMENIASG (180 aa)). At 2 to 253 (GGWSSKPRKG…PGYRWMCLRR (252 aa)) the chain is on the intravirion; in internal conformation side. Polar residues predominate over residues 96–106 (STNRQSGRQPT). Residues 120–174 (VQWNSTTFHQTLQDPRVRALYLPAGGSSSGTVSPAQNTVSAISSILSTTGDPVPN) are pre-S2. Residues 182–202 (LLGPLLVLQAGFFSLTKILTI) traverse the membrane as a helical segment. Residues 203–253 (PQSLDSWWTSLNFLGGTPVCLGQNSQSQISSHSPTCCPPICPGYRWMCLRR) are Intravirion; in external conformation-facing. The chain crosses the membrane as a helical span at residues 254–274 (FIIFLCILLLCLIFLLVLLDY). Topologically, residues 275 to 348 (QGMLPVCPLI…WASVRFSWLS (74 aa)) are virion surface. Residue Asn320 is glycosylated (N-linked (GlcNAc...) asparagine; by host). The helical transmembrane segment at 349–369 (LLVPFVQWFVGLSPTVWLSVI) threads the bilayer. Topologically, residues 370–375 (WMMWFW) are intravirion. The chain crosses the membrane as a helical span at residues 376–398 (GPSLYNILSPFMPLLPIFLCLWV). Over 399 to 400 (YM) the chain is Virion surface.

This sequence belongs to the orthohepadnavirus major surface antigen family. In terms of assembly, li-HBsAg interacts with capsid protein and with HDV Large delta antigen. Isoform M associates with host chaperone CANX through its pre-S2 N glycan. This association may be essential for M proper secretion. Interacts (via its myristoylated pre-S1 region) with the host SLC10A1/NTCP; this interaction is essential for viral entry. Post-translationally, isoform M is N-terminally acetylated by host at a ratio of 90%, and N-glycosylated by host at the pre-S2 region. Myristoylated; this modification is essential for its interaction with the host protein SLC10A1/NTCP.

The protein localises to the virion membrane. Functionally, the large envelope protein exists in two topological conformations, one which is termed 'external' or Le-HBsAg and the other 'internal' or Li-HBsAg. In its external conformation the protein attaches the virus to cell receptors and thereby initiating infection. This interaction determines the species specificity and liver tropism. This attachment induces virion internalization predominantly through caveolin-mediated endocytosis. The large envelope protein also assures fusion between virion membrane and endosomal membrane. In its internal conformation the protein plays a role in virion morphogenesis and mediates the contact with the nucleocapsid like a matrix protein. Its function is as follows. The middle envelope protein plays an important role in the budding of the virion. It is involved in the induction of budding in a nucleocapsid independent way. In this process the majority of envelope proteins bud to form subviral lipoprotein particles of 22 nm of diameter that do not contain a nucleocapsid. This chain is Large envelope protein, found in Homo sapiens (Human).